The primary structure comprises 887 residues: MKKKKVITFIAIIILLLILFLYRSTSFIIDFQWFQELSYTSVFLKEFFTIGKLFTLSFALIFISIWLYYLSLKKNINWQEHNKRKKLMIAFNCIVSSLFAYFFSSKYWYQILQFNNSVPFDIKDPIFNKDISFYIFKLPFLQSIYVLILRVLVFLVIYTLILYFIINLKDKIKEINFRKTLNIKSIKNDVKDFAGKQLAVVSAIILLFLSMGYIIKSRNLVYSPRGLIFGASYTDINISLLIYRIIIIVSFIGSIVVFISIINKKIKPIIISLVLIFLLILSEGATSKLVQTFVVNSNEKKLEEPFVRYNIDYTRKAFDIDDIEEINFDINNNLTAQDIKNNKESIDNIRINSFEPALEFYNQYQTIRPYYIFNDIDIDRYKINGKESQIFISARELNLKAIEPNTWQNRHLIYTHGYGVAMSKVNSVTEEGQPDFSIKDIPQVNNTDILIDNPRIYFGEKTDEYAIINTKLKEFDYPQGANNKITEYDGKSGIKMNLLNKIIFAINKKDLNFLLSRDVTRESRILINRNIVERAKKIAPFLTYDNDPHLVIHDNKLYWVIDAYTTSNKYPYSQPYEDINYIRNSAKVIIDAIDGDINFYITNKNDPIIVSYSKIFKNLFKDYSKIPEGIKEHLKYPEDIFKIQCKVFEKYHMTDTIAFLNGDDLWELSQDEKTMNTDKATNESPYVFMKLPNDNLEEMILLGYFNMKQRNTMSSMLAARMTSDNYGKLIMYRFPIHKTIYSPYFFKQKIKQDPLISKELSLWNIGEGGAKVQFGDTIILPINNSLLYVESMYLRAKGKNSAPEVKGIILSYGDKIVLDTTMDEALTKLFTKKEEGKEENIEDNKINSIKEAKVIYDKAIKAQRDGDWAKYGEYIKKLGNILEYMVK.

The next 7 helical transmembrane spans lie at 9–29 (FIAI…SFII), 47–67 (FFTI…SIWL), 87–107 (LMIA…SSKY), 146–166 (VLIL…YFII), 195–215 (GKQL…GYII), 242–262 (IYRI…ISII), and 266–286 (IKPI…EGAT).

Belongs to the UPF0182 family.

It is found in the cell membrane. The polypeptide is UPF0182 protein CTC_00086 (Clostridium tetani (strain Massachusetts / E88)).